We begin with the raw amino-acid sequence, 173 residues long: Oleosin 18.5 kDa (173 aa).

The tract at residues Met1–Lys45 is polar. The tract at residues Ala46–Tyr117 is hydrophobic. Helical transmembrane passes span Gly54–Ala74, Pro76–Ile96, and Thr97–Tyr117. The disordered stretch occupies residues Tyr151 to Thr173. The span at Gly158–Arg167 shows a compositional bias: basic and acidic residues.

It belongs to the oleosin family.

The protein localises to the lipid droplet. It is found in the membrane. In terms of biological role, may have a structural role to stabilize the lipid body during desiccation of the seed by preventing coalescence of the oil. Probably interacts with both lipid and phospholipid moieties of lipid bodies. May also provide recognition signals for specific lipase anchorage in lipolysis during seedling growth. This Arabidopsis thaliana (Mouse-ear cress) protein is Oleosin 18.5 kDa.